The following is a 460-amino-acid chain: MKKNAKMKAPTATKTAAKTPVVDYRVSKEAMENPEVFAKLAKWGREEIKIAETEMPGLMALRKEYKKQQPLKGARIAGCLHMTIQTAVLIETLVELGAEIRWSSCNIFSTQDHAAAAIAAAGIPVFAWKGLTEQEFNWCIEQTIVGWGKEGFNMILDDGGDLTNMMHEPRFAKEMKKIIGISEETTTGVHNLEVLVKQGKLKVPAININDSVTKSKFDNLYGCRESLADGIKRATDVMVAGKICVVAGYGDVGKGSAHSLRGLGARVLVTEIDPICALQAAMEGFEVTTMEDAAPLGDIFVTATGCCDIITDKHFMKMKNNAIVCNIGHFDIEIDMAWLNKNSKMREVKPQVDIHTLKNGKQVIILAKGRLVNLGCATGHPSFVMSNSFTNQVLAQMELFNNRDKYQDIAVYRLPKHLDEKVAALHLDKLGVKLTKLSSKQAKYLHMSPQGPFKPEHYRY.

3 residues coordinate substrate: threonine 83, aspartate 158, and glutamate 184. 185–187 (TTT) lines the NAD(+) pocket. Substrate-binding residues include lysine 214 and aspartate 218. NAD(+) contacts are provided by residues asparagine 219, 248 to 253 (GYGDVG), glutamate 271, 327 to 329 (IGH), and asparagine 373.

The protein belongs to the adenosylhomocysteinase family. NAD(+) is required as a cofactor.

Its subcellular location is the cytoplasm. The enzyme catalyses S-adenosyl-L-homocysteine + H2O = L-homocysteine + adenosine. Its pathway is amino-acid biosynthesis; L-homocysteine biosynthesis; L-homocysteine from S-adenosyl-L-homocysteine: step 1/1. May play a key role in the regulation of the intracellular concentration of adenosylhomocysteine. The chain is Adenosylhomocysteinase from Bdellovibrio bacteriovorus (strain ATCC 15356 / DSM 50701 / NCIMB 9529 / HD100).